Consider the following 287-residue polypeptide: Tetraspanning orphan receptor (287 aa).

Topologically, residues 1 to 27 (MSPSLVSDTQKHERGSHGVKIKHFSPY) are extracellular. Residues 28 to 48 (IAVCVTTFSLAFCCFMVHGAI) traverse the membrane as a helical segment. Topologically, residues 49-55 (TRQPTHL) are cytoplasmic. The chain crosses the membrane as a helical span at residues 56-76 (LPFFFIQVFDLIICLIHILGF). At 77 to 91 (MSSTSDIRLVIHTKT) the chain is on the extracellular side. A helical membrane pass occupies residues 92 to 114 (GPIYIKSTGLTFIILSISRMMLA). Residues 115–287 (FKAYCLGMVW…NASSNAHSSC (173 aa)) are Cytoplasmic-facing. The disordered stretch occupies residues 165-190 (NNSIGNSGSPNEPNTRPRPDTITYDP).

In terms of assembly, interacts (via N-terminal extracellular domain) with human C2a.

Its subcellular location is the cell membrane. In terms of biological role, cell surface receptor that binds to human complement C2a protein. This results in inhibition of the classical and lectin pathways of complement activation, probably due to interference with binding of C2a to C4b and interference with cleavage by C1 or MASP2 such that C3 convertase cannot be formed. This infers resistance to complement-mediated cell lysis, allowing parasite survival and infection. In Trypanosoma cruzi, this protein is Tetraspanning orphan receptor.